We begin with the raw amino-acid sequence, 242 residues long: Caspase-14 (242 aa).

A propeptide spanning residues 1 to 5 (MSNPR) is cleaved from the precursor. Active-site residues include histidine 89 and cysteine 132. Residues 147 to 152 (EIVMVI) constitute a propeptide that is removed on maturation.

Belongs to the peptidase C14A family. In terms of assembly, heterodimer of a large and a small subunit, both processed from the precursor; the mature active form is a p17/p10 dimer and the intermediate form a p20/p8 dimer. Maturation by proteolytic processing appears to be a two-step process. The precursor is processed by KLK7 to yield the p20/p8 intermediate form which acts on the precursor to yield the p17/p10 mature form. Initially, cleavage between Ile-152 and Lys-153 has been proposed to yield the large and small subunits of the active enzyme. Expressed in keratinocytes of adult skin suprabasal layers (from spinous layers to the stratum granulosum and stratum corneum) (at protein level). Expressed in keratinocytes of hair shaft and sebaceous glands (at protein level). In psoriatic skin only expressed at very low levels. The p17/10 mature form is expressed in epidermis stratum corneum, the p20/p8 intermediate form in epidermis upper granular cells of the stratum granulosum.

It is found in the cytoplasm. Its subcellular location is the nucleus. Its activity is regulated as follows. Inhibited by caspase-1 inhibitor YVAD-FMK and the pan-caspase inhibitor VAD-FMK. Functionally, non-apoptotic caspase involved in epidermal differentiation. Is the predominant caspase in epidermal stratum corneum. Seems to play a role in keratinocyte differentiation and is required for cornification. Regulates maturation of the epidermis by proteolytically processing filaggrin. In vitro has a preference for the substrate [WY]-X-X-D motif and is active on the synthetic caspase substrate WEHD-ACF. Involved in processing of prosaposin in the epidermis. May be involved in retinal pigment epithelium cell barrier function. Involved in DNA degradation in differentiated keratinocytes probably by cleaving DFFA/ICAD leading to liberation of DFFB/CAD. In Homo sapiens (Human), this protein is Caspase-14 (CASP14).